Here is an 861-residue protein sequence, read N- to C-terminus: Leucine--tRNA ligase (861 aa).

The 'HIGH' region motif lies at 42–52 (PYPSGRLHMGH). The 'KMSKS' region motif lies at 619-623 (KMSKS). Residue Lys-622 coordinates ATP.

The protein belongs to the class-I aminoacyl-tRNA synthetase family.

The protein localises to the cytoplasm. It carries out the reaction tRNA(Leu) + L-leucine + ATP = L-leucyl-tRNA(Leu) + AMP + diphosphate. The sequence is that of Leucine--tRNA ligase from Haemophilus influenzae (strain PittGG).